A 680-amino-acid chain; its full sequence is DNA-directed RNA polymerase subunit beta' (680 aa).

Residues C68, C70, C86, and C89 each coordinate Zn(2+). 3 residues coordinate Mg(2+): D488, D490, and D492.

This sequence belongs to the RNA polymerase beta' chain family. RpoC1 subfamily. In terms of assembly, in plastids the minimal PEP RNA polymerase catalytic core is composed of four subunits: alpha, beta, beta', and beta''. When a (nuclear-encoded) sigma factor is associated with the core the holoenzyme is formed, which can initiate transcription. It depends on Mg(2+) as a cofactor. Zn(2+) is required as a cofactor.

Its subcellular location is the plastid. The protein localises to the chloroplast. The catalysed reaction is RNA(n) + a ribonucleoside 5'-triphosphate = RNA(n+1) + diphosphate. Functionally, DNA-dependent RNA polymerase catalyzes the transcription of DNA into RNA using the four ribonucleoside triphosphates as substrates. This is DNA-directed RNA polymerase subunit beta' from Nicotiana tabacum (Common tobacco).